The primary structure comprises 186 residues: Ribosome-recycling factor (186 aa).

Belongs to the RRF family.

The protein resides in the cytoplasm. In terms of biological role, responsible for the release of ribosomes from messenger RNA at the termination of protein biosynthesis. May increase the efficiency of translation by recycling ribosomes from one round of translation to another. This chain is Ribosome-recycling factor, found in Bordetella parapertussis (strain 12822 / ATCC BAA-587 / NCTC 13253).